Consider the following 1365-residue polypeptide: DNA-directed RNA polymerase subunit beta' (1365 aa).

The Zn(2+) site is built by Cys249, Cys316, Cys323, and Cys326.

It belongs to the RNA polymerase beta' chain family. RpoC2 subfamily. In cyanobacteria the RNAP catalytic core is composed of 2 alpha, 1 beta, 1 beta', 1 gamma and 1 omega subunit. When a sigma factor is associated with the core the holoenzyme is formed, which can initiate transcription. It depends on Zn(2+) as a cofactor.

The enzyme catalyses RNA(n) + a ribonucleoside 5'-triphosphate = RNA(n+1) + diphosphate. In terms of biological role, DNA-dependent RNA polymerase catalyzes the transcription of DNA into RNA using the four ribonucleoside triphosphates as substrates. This is DNA-directed RNA polymerase subunit beta' from Synechococcus sp. (strain CC9311).